Here is a 1257-residue protein sequence, read N- to C-terminus: Phosphatidylinositol 3,4,5-trisphosphate 5-phosphatase 2 (1257 aa).

The SH2 domain occupies tryptophan 21–valine 117. Residues glycine 119 to serine 132 show a composition bias toward basic and acidic residues. Residues glycine 119–valine 181 are disordered. Serine 132 is modified (phosphoserine). Residues proline 156–proline 166 show a composition bias toward pro residues. At threonine 165 the chain carries Phosphothreonine. Phosphoserine is present on residues serine 241 and serine 353. A Phosphotyrosine modification is found at tyrosine 887. Serine 891 is modified (phosphoserine). The tract at residues threonine 897–alanine 986 is disordered. Residues proline 939–alanine 951 show a composition bias toward pro residues. The SH3-binding motif lies at proline 945–arginine 950. The segment covering valine 952 to glycine 966 has biased composition (basic and acidic residues). The NPXY motif motif lies at asparagine 984–tyrosine 987. Tyrosine 987 is modified (phosphotyrosine). A disordered region spans residues serine 1004 to alanine 1115. Pro residues-rich tracts occupy residues leucine 1049–proline 1060 and glycine 1088–threonine 1104. At serine 1132 the chain carries Phosphoserine. Tyrosine 1136 and tyrosine 1161 each carry phosphotyrosine. The SAM domain maps to leucine 1195–lysine 1257. Serine 1256 carries the post-translational modification Phosphoserine.

It belongs to the inositol 1,4,5-trisphosphate 5-phosphatase family. In terms of assembly, interacts with tyrosine phosphorylated form of SHC1. Interacts with EGFR. Upon stimulation by the EGF signaling pathway, it forms a complex with SHC1 and EGFR. Interacts with cytoskeletal protein SORBS3/vinexin, promoting its localization to the periphery of cells. Forms a complex with filamin (FLNA or FLNB), actin, GPIb (GP1BA or GP1BB) that regulates cortical and submembraneous actin. Interacts with c-Met/MET, when c-Met/MET is phosphorylated on 'Tyr-1356'. Interacts with p130Cas/BCAR1. Interacts with CENTD3/ARAP3 via its SAM domain. Interacts with c-Cbl/CBL and CAP/SORBS1. Interacts with activated EPHA2 receptor. Interacts with receptors FCGR2A. Interacts with FCGR2B. Interacts with tyrosine kinase ABL1. Interacts with tyrosine kinase TEC. Interacts with CSF1R. Interacts (via N-terminus) with SH3YL1 (via SH3 domain). Interacts (via SH2 domain) with tyrosine phosphorylated KLRC1 (via ITIM). Interacts with NEDD9/HEF1. In terms of processing, tyrosine phosphorylated by the members of the SRC family after exposure to a diverse array of extracellular stimuli such as insulin, growth factors such as EGF or PDGF, chemokines, integrin ligands and hypertonic and oxidative stress. May be phosphorylated upon IgG receptor FCGR2B-binding. Phosphorylated at Tyr-987 following cell attachment and spreading. Phosphorylated at Tyr-1161 following EGF signaling pathway stimulation.

The protein resides in the cytoplasm. The protein localises to the cytosol. Its subcellular location is the cytoskeleton. It is found in the membrane. It localises to the cell projection. The protein resides in the filopodium. The protein localises to the lamellipodium. Its subcellular location is the basal cell membrane. It is found in the nucleus. It localises to the nucleus speckle. The protein resides in the spindle pole. The catalysed reaction is a 1,2-diacyl-sn-glycero-3-phospho-(1D-myo-inositol-3,4,5-trisphosphate) + H2O = a 1,2-diacyl-sn-glycero-3-phospho-(1D-myo-inositol-3,4-bisphosphate) + phosphate. It catalyses the reaction 1,2-dioctanoyl-sn-glycero-3-phospho-(1D-myo-inositol-3,4,5-trisphosphate) + H2O = 1,2-dioctanoyl-sn-glycero-3-phospho-(1D-myo-inositol-3,4-bisphosphate) + phosphate. It carries out the reaction 1,2-dihexadecanoyl-sn-glycero-3-phospho-(1D-myo-inositol-3,4,5-trisphosphate) + H2O = 1,2-dihexadecanoyl-sn-glycero-3-phospho-(1D-myo-inositol-3,4-bisphosphate) + phosphate. Activated upon translocation to the sites of synthesis of PtdIns(3,4,5)P3 in the membrane. Enzymatic activity is enhanced in the presence of phosphatidylserine. In terms of biological role, phosphatidylinositol (PtdIns) phosphatase that specifically hydrolyzes the 5-phosphate of phosphatidylinositol-3,4,5-trisphosphate (PtdIns(3,4,5)P3) to produce PtdIns(3,4)P2, thereby negatively regulating the PI3K (phosphoinositide 3-kinase) pathways. Required for correct mitotic spindle orientation and therefore progression of mitosis. Plays a central role in regulation of PI3K-dependent insulin signaling, although the precise molecular mechanisms and signaling pathways remain unclear. While overexpression reduces both insulin-stimulated MAP kinase and Akt activation, its absence does not affect insulin signaling or GLUT4 trafficking. Confers resistance to dietary obesity. May act by regulating AKT2, but not AKT1, phosphorylation at the plasma membrane. Part of a signaling pathway that regulates actin cytoskeleton remodeling. Required for the maintenance and dynamic remodeling of actin structures as well as in endocytosis, having a major impact on ligand-induced EGFR internalization and degradation. Participates in regulation of cortical and submembraneous actin by hydrolyzing PtdIns(3,4,5)P3 thereby regulating membrane ruffling. Regulates cell adhesion and cell spreading. Required for HGF-mediated lamellipodium formation, cell scattering and spreading. Acts as a negative regulator of EPHA2 receptor endocytosis by inhibiting via PI3K-dependent Rac1 activation. Acts as a regulator of neuritogenesis by regulating PtdIns(3,4,5)P3 level and is required to form an initial protrusive pattern, and later, maintain proper neurite outgrowth. Acts as a negative regulator of the FC-gamma-RIIA receptor (FCGR2A). Mediates signaling from the FC-gamma-RIIB receptor (FCGR2B), playing a central role in terminating signal transduction from activating immune/hematopoietic cell receptor systems. Involved in EGF signaling pathway. Upon stimulation by EGF, it is recruited by EGFR and dephosphorylates PtdIns(3,4,5)P3. Plays a negative role in regulating the PI3K-PKB pathway, possibly by inhibiting PKB activity. Down-regulates Fc-gamma-R-mediated phagocytosis in macrophages independently of INPP5D/SHIP1. In macrophages, down-regulates NF-kappa-B-dependent gene transcription by regulating macrophage colony-stimulating factor (M-CSF)-induced signaling. Plays a role in the localization of AURKA and NEDD9/HEF1 to the basolateral membrane at interphase in polarized cysts, thereby mediates cell cycle homeostasis, cell polarization and cilia assembly. Additionally promotion of cilia growth is also facilitated by hydrolysis of (PtdIns(3,4,5)P3) to PtdIns(3,4)P2. Promotes formation of apical membrane-initiation sites during the initial stages of lumen formation via Rho family-induced actin filament organization and CTNNB1 localization to cell-cell contacts. May also hydrolyze PtdIns(1,3,4,5)P4, and could thus affect the levels of the higher inositol polyphosphates like InsP6. Involved in endochondral ossification. The chain is Phosphatidylinositol 3,4,5-trisphosphate 5-phosphatase 2 from Rattus norvegicus (Rat).